The following is a 598-amino-acid chain: Elongation factor 4 (598 aa).

The tr-type G domain maps to 4–186 (SHIRNFSIIA…VIVNKIPPPE (183 aa)). GTP contacts are provided by residues 16–21 (DHGKST) and 133–136 (NKID).

This sequence belongs to the TRAFAC class translation factor GTPase superfamily. Classic translation factor GTPase family. LepA subfamily.

It is found in the cell inner membrane. The catalysed reaction is GTP + H2O = GDP + phosphate + H(+). Required for accurate and efficient protein synthesis under certain stress conditions. May act as a fidelity factor of the translation reaction, by catalyzing a one-codon backward translocation of tRNAs on improperly translocated ribosomes. Back-translocation proceeds from a post-translocation (POST) complex to a pre-translocation (PRE) complex, thus giving elongation factor G a second chance to translocate the tRNAs correctly. Binds to ribosomes in a GTP-dependent manner. This is Elongation factor 4 from Alteromonas mediterranea (strain DSM 17117 / CIP 110805 / LMG 28347 / Deep ecotype).